The following is a 118-amino-acid chain: Small ribosomal subunit protein uS19c (118 aa).

The interval 92-118 (KKSSKKVTKNKKSIKKNIKTTSKKFKK) is disordered.

This sequence belongs to the universal ribosomal protein uS19 family.

It is found in the plastid. Functionally, protein S19 forms a complex with S13 that binds strongly to the 16S ribosomal RNA. The sequence is that of Small ribosomal subunit protein uS19c (rps19) from Euglena longa (Euglenophycean alga).